We begin with the raw amino-acid sequence, 63 residues long: Cytochrome c oxidase subunit 7C, mitochondrial (63 aa).

Residues 1–16 (MWGQGVRRFTTSVVRR) constitute a mitochondrion transit peptide. Residues 17 to 33 (SHYEEGPGKNLPFSVEN) are Mitochondrial matrix-facing. An N6-acetyllysine; alternate modification is found at K25. Residue K25 is modified to N6-succinyllysine; alternate. The helical transmembrane segment at 34–60 (KWRLLAMMTLYLGSGFAAPFFIVRHQL) threads the bilayer. The Mitochondrial intermembrane segment spans residues 61–63 (LKK).

Belongs to the cytochrome c oxidase VIIc family. Component of the cytochrome c oxidase (complex IV, CIV), a multisubunit enzyme composed of 14 subunits. The complex is composed of a catalytic core of 3 subunits MT-CO1, MT-CO2 and MT-CO3, encoded in the mitochondrial DNA, and 11 supernumerary subunits COX4I, COX5A, COX5B, COX6A, COX6B, COX6C, COX7A, COX7B, COX7C, COX8 and NDUFA4, which are encoded in the nuclear genome. The complex exists as a monomer or a dimer and forms supercomplexes (SCs) in the inner mitochondrial membrane with NADH-ubiquinone oxidoreductase (complex I, CI) and ubiquinol-cytochrome c oxidoreductase (cytochrome b-c1 complex, complex III, CIII), resulting in different assemblies (supercomplex SCI(1)III(2)IV(1) and megacomplex MCI(2)III(2)IV(2)). Interacts with RAB5IF.

Its subcellular location is the mitochondrion inner membrane. It functions in the pathway energy metabolism; oxidative phosphorylation. In terms of biological role, component of the cytochrome c oxidase, the last enzyme in the mitochondrial electron transport chain which drives oxidative phosphorylation. The respiratory chain contains 3 multisubunit complexes succinate dehydrogenase (complex II, CII), ubiquinol-cytochrome c oxidoreductase (cytochrome b-c1 complex, complex III, CIII) and cytochrome c oxidase (complex IV, CIV), that cooperate to transfer electrons derived from NADH and succinate to molecular oxygen, creating an electrochemical gradient over the inner membrane that drives transmembrane transport and the ATP synthase. Cytochrome c oxidase is the component of the respiratory chain that catalyzes the reduction of oxygen to water. Electrons originating from reduced cytochrome c in the intermembrane space (IMS) are transferred via the dinuclear copper A center (CU(A)) of subunit 2 and heme A of subunit 1 to the active site in subunit 1, a binuclear center (BNC) formed by heme A3 and copper B (CU(B)). The BNC reduces molecular oxygen to 2 water molecules using 4 electrons from cytochrome c in the IMS and 4 protons from the mitochondrial matrix. This Carlito syrichta (Philippine tarsier) protein is Cytochrome c oxidase subunit 7C, mitochondrial (COX7C).